Here is a 233-residue protein sequence, read N- to C-terminus: MLSFDKVSTYYGKIQALHDVSVEVKKGEIVTLIGANGAGKSTLLMTLCGSPQAASGSIRYEGEELVGLPSSTIMRKSIAVVPEGRRVFSRLTVEENLAMGGFFTDKDDYQVQMDKVLELFPRLKERYEQRAGTMSGGEQQMLAIGRALMSKPKLLLLDEPSLGLAPIIIQQIFEIIEQLRREGVTVFLVEQNANQALKLADRAYVLENGRIVMHDTGAALLTNPKVRDAYLGG.

One can recognise an ABC transporter domain in the interval 2–233 (LSFDKVSTYY…PKVRDAYLGG (232 aa)). 34–41 (GANGAGKS) lines the ATP pocket.

It belongs to the ABC transporter superfamily.

Its subcellular location is the cell inner membrane. Functionally, component of the high affinity leucine, isoleucine, valine, transport system (LIV-I), which is operative without Na(+) and is specific for alanine and threonine, in addition to branched-chain amino acids. The sequence is that of High-affinity branched-chain amino acid transport ATP-binding protein BraG (braG) from Pseudomonas aeruginosa (strain ATCC 15692 / DSM 22644 / CIP 104116 / JCM 14847 / LMG 12228 / 1C / PRS 101 / PAO1).